The primary structure comprises 75 residues: MSDVVSVRVKPGSKKGPLVETGPDGELTVYVRERAVDGKANAAVIRVLAEHFGVPRSLVELTGGASSRIKRFRIG.

Belongs to the UPF0235 family.

This chain is UPF0235 protein Mvan_2846, found in Mycolicibacterium vanbaalenii (strain DSM 7251 / JCM 13017 / BCRC 16820 / KCTC 9966 / NRRL B-24157 / PYR-1) (Mycobacterium vanbaalenii).